A 573-amino-acid chain; its full sequence is L-lactate dehydrogenase (cytochrome) (573 aa).

The transit peptide at 1 to 73 (MFKSQLRTAT…LYQKDKFISA (73 aa)) directs the protein to the mitochondrion. The region spanning 80 to 157 (DIELTPEIVS…PPEKHLGPLV (78 aa)) is the Cytochrome b5 heme-binding domain. Residues His115, His138, and Tyr208 each coordinate heme b. Positions 182–542 (PPLSQMINLH…TPELLDTRSI (361 aa)) constitute an FMN hydroxy acid dehydrogenase domain. Tyr208 provides a ligand contact to pyruvate. FMN contacts are provided by residues 260-263 (SATA), Ser290, and Gln313. Tyr315 contributes to the pyruvate binding site. An FMN-binding site is contributed by Thr341. Lys357 lines the heme b pocket. An FMN-binding site is contributed by Lys408. His432 and Arg435 together coordinate pyruvate. Residues 468-472 (DGGVR) and 491-492 (GR) contribute to the FMN site.

It in the N-terminal section; belongs to the cytochrome b5 family. In the C-terminal section; belongs to the FMN-dependent alpha-hydroxy acid dehydrogenase family. Homotetramer. Requires FMN as cofactor. It depends on heme b as a cofactor.

The protein resides in the mitochondrion intermembrane space. The catalysed reaction is (S)-lactate + 2 Fe(III)-[cytochrome c] = 2 Fe(II)-[cytochrome c] + pyruvate + 2 H(+). Functionally, catalyzes the oxidation of (S)-lactate (L-lactate) to pyruvate with subsequent transfer of electrons to cytochrome c. Is involved in the utilization of (S)-lactate as a sole source of carbon for growth. This chain is L-lactate dehydrogenase (cytochrome) (CYB2), found in Wickerhamomyces anomalus (Yeast).